Reading from the N-terminus, the 207-residue chain is Outer-membrane lipoprotein LolB (207 aa).

A signal peptide spans 1-21; it reads MPMRKRHFYRLLPLASLLLAA. Residue Cys22 is the site of N-palmitoyl cysteine attachment. Cys22 is lipidated: S-diacylglycerol cysteine.

Belongs to the LolB family. Monomer.

It is found in the cell outer membrane. In terms of biological role, plays a critical role in the incorporation of lipoproteins in the outer membrane after they are released by the LolA protein. This chain is Outer-membrane lipoprotein LolB, found in Yersinia pestis bv. Antiqua (strain Antiqua).